Reading from the N-terminus, the 185-residue chain is Ribosome-recycling factor (185 aa).

It belongs to the RRF family.

The protein resides in the cytoplasm. Its function is as follows. Responsible for the release of ribosomes from messenger RNA at the termination of protein biosynthesis. May increase the efficiency of translation by recycling ribosomes from one round of translation to another. In Shewanella denitrificans (strain OS217 / ATCC BAA-1090 / DSM 15013), this protein is Ribosome-recycling factor.